The chain runs to 269 residues: Hydroxyethylthiazole kinase (269 aa).

Met46 is a binding site for substrate. 2 residues coordinate ATP: Arg122 and Thr168. Residue Gly195 participates in substrate binding.

Belongs to the Thz kinase family. Requires Mg(2+) as cofactor.

The enzyme catalyses 5-(2-hydroxyethyl)-4-methylthiazole + ATP = 4-methyl-5-(2-phosphooxyethyl)-thiazole + ADP + H(+). The protein operates within cofactor biosynthesis; thiamine diphosphate biosynthesis; 4-methyl-5-(2-phosphoethyl)-thiazole from 5-(2-hydroxyethyl)-4-methylthiazole: step 1/1. Catalyzes the phosphorylation of the hydroxyl group of 4-methyl-5-beta-hydroxyethylthiazole (THZ). The protein is Hydroxyethylthiazole kinase of Geobacillus kaustophilus (strain HTA426).